Here is a 585-residue protein sequence, read N- to C-terminus: A-type ATP synthase subunit A (585 aa).

G231 to T238 serves as a coordination point for ATP.

The protein belongs to the ATPase alpha/beta chains family. In terms of assembly, has multiple subunits with at least A(3), B(3), C, D, E, F, H, I and proteolipid K(x).

It localises to the cell membrane. It carries out the reaction ATP + H2O + 4 H(+)(in) = ADP + phosphate + 5 H(+)(out). Its function is as follows. Component of the A-type ATP synthase that produces ATP from ADP in the presence of a proton gradient across the membrane. The A chain is the catalytic subunit. The sequence is that of A-type ATP synthase subunit A from Thermococcus onnurineus (strain NA1).